A 941-amino-acid polypeptide reads, in one-letter code: RNA-binding protein 4F (941 aa).

Over residues 1–13 (MDADKQLERQLEK) the composition is skewed to basic and acidic residues. The segment at 1 to 149 (MDADKQLERQ…DSDNAGGGNQ (149 aa)) is disordered. The span at 14–32 (ELDEMPAEDLDDDAYDEYD) shows a compositional bias: acidic residues. Positions 42 to 52 (GSPQQGHSESP) are enriched in polar residues. At serine 43 the chain carries Phosphoserine. Over residues 55–65 (EEEHKSEELRQ) the composition is skewed to basic and acidic residues. Residues 87–98 (SSDDEPSVEETE) are compositionally biased toward acidic residues. Residues 111-134 (DSSSSSDDVGVIEGSELESNSEVS) show a composition bias toward low complexity. Residue serine 153 is modified to Phosphoserine. Positions 629–713 (RSRIKPNSQS…GPANAEAKES (85 aa)) are disordered. Positions 671 to 680 (EQQQQQQQQQ) are enriched in low complexity. Residue serine 713 is modified to Phosphoserine. Residue tyrosine 717 is modified to Phosphotyrosine. Serine 718 is modified (phosphoserine). Positions 724-801 (NKIFVRNLHP…MNISVAISNP (78 aa)) constitute an RRM domain. Composition is skewed to basic and acidic residues over residues 862-902 (EANG…KGDD), 913-922 (QKGDEKKEEE), and 930-941 (SNDDFRKLFLKD). Residues 862 to 941 (EANGEEQKGD…DDFRKLFLKD (80 aa)) form a disordered region.

Its subcellular location is the cytoplasm. May be involved in gene regulation during development. Binds RNA. The chain is RNA-binding protein 4F from Drosophila melanogaster (Fruit fly).